The primary structure comprises 399 residues: Lysosomal acid lipase/cholesteryl ester hydrolase (399 aa).

An N-terminal signal peptide occupies residues 1-27 (MKMRFLGLVVCLVLWTLHSEASGGKLT). The propeptide at 28–76 (AVNPETNMNVSEIISYWGFPSEEYLVETEDGYILCLNRIPHGRKNHSDK) is removed in mature form. N-linked (GlcNAc...) asparagine glycans are attached at residues asparagine 36, asparagine 72, asparagine 101, and asparagine 161. The AB hydrolase-1 domain occupies 80-380 (PVVFLQHGLL…EWEHLDFIWG (301 aa)). Serine 174 acts as the Charge relay system in catalysis. 2 N-linked (GlcNAc...) asparagine glycosylation sites follow: asparagine 273 and asparagine 321. The active-site Charge relay system is the histidine 374.

This sequence belongs to the AB hydrolase superfamily. Lipase family. In terms of assembly, monomer. Post-translationally, glycosylation is not essential for catalytic activity.

It is found in the lysosome. The catalysed reaction is a sterol ester + H2O = a sterol + a fatty acid + H(+). It carries out the reaction cholesteryl (9Z-octadecenoate) + H2O = cholesterol + (9Z)-octadecenoate + H(+). It catalyses the reaction a triacylglycerol + H2O = a 1,2-diacylglycerol + a fatty acid + H(+). The enzyme catalyses 1,2-di-(9Z-octadecenoyl)-glycerol + (9Z)-octadecenoate + H(+) = 1,2,3-tri-(9Z-octadecenoyl)-glycerol + H2O. The catalysed reaction is a 1,2-diacylglycerol + H2O = a 1-acylglycerol + a fatty acid + H(+). It carries out the reaction 1,2-di-(9Z-octadecenoyl)-glycerol + H2O = 1-(9Z-octadecenoyl)-glycerol + (9Z)-octadecenoate + H(+). It catalyses the reaction a 1,3-diacylglycerol + H2O = a 1-acylglycerol + a fatty acid + H(+). The enzyme catalyses 1,3-di-(9Z-octadecenoyl)-glycerol + H2O = 1-(9Z-octadecenoyl)-glycerol + (9Z)-octadecenoate + H(+). Catalyzes the deacylation of cholesteryl ester core lipids of endocytosed low density lipoproteins to generate free fatty acids and cholesterol. Hydrolyzes triglycerides (1,2,3-triacylglycerol) and diglycerides (such as 1,2-diacylglycerol and 1,3-diacylglycerol) with preference for the acyl moieties at the sn-1 or sn-3 positions. This is Lysosomal acid lipase/cholesteryl ester hydrolase (LIPA) from Macaca fascicularis (Crab-eating macaque).